We begin with the raw amino-acid sequence, 330 residues long: o-succinylbenzoate synthase (330 aa).

The active-site Proton donor is the lysine 130. Mg(2+)-binding residues include aspartate 155, glutamate 184, and aspartate 206. Lysine 228 functions as the Proton acceptor in the catalytic mechanism.

The protein belongs to the mandelate racemase/muconate lactonizing enzyme family. MenC type 1 subfamily. As to quaternary structure, monomer. Requires a divalent metal cation as cofactor.

The catalysed reaction is (1R,6R)-6-hydroxy-2-succinyl-cyclohexa-2,4-diene-1-carboxylate = 2-succinylbenzoate + H2O. Its pathway is quinol/quinone metabolism; 1,4-dihydroxy-2-naphthoate biosynthesis; 1,4-dihydroxy-2-naphthoate from chorismate: step 4/7. It participates in cofactor biosynthesis; phylloquinone biosynthesis. Its function is as follows. Converts 2-succinyl-6-hydroxy-2,4-cyclohexadiene-1-carboxylate (SHCHC) to 2-succinylbenzoate (OSB). Does not show N-succinylamino acid racemase (NSAR) activity with N-succinyl-L-phenylglycine as substrate. In Bdellovibrio bacteriovorus (strain ATCC 15356 / DSM 50701 / NCIMB 9529 / HD100), this protein is o-succinylbenzoate synthase.